Here is a 304-residue protein sequence, read N- to C-terminus: Ribonuclease BN (304 aa).

The Zn(2+) site is built by His-63, His-65, Asp-67, His-68, His-140, Asp-211, and His-269. Residue Asp-67 is the Proton acceptor of the active site.

It belongs to the RNase Z family. RNase BN subfamily. In terms of assembly, homodimer. Zn(2+) serves as cofactor.

In terms of biological role, zinc phosphodiesterase, which has both exoribonuclease and endoribonuclease activities. The protein is Ribonuclease BN of Cronobacter sakazakii (strain ATCC BAA-894) (Enterobacter sakazakii).